The sequence spans 321 residues: NADPH-dependent D-xylose reductase (321 aa).

The active-site Proton donor is the Y50. H112 contacts substrate. NADP(+) is bound by residues 167-168 (SN), 216-225 (SSFGPQSFVE), and 272-282 (KSNKKERLLGN).

It belongs to the aldo/keto reductase family.

The enzyme catalyses xylitol + NAD(+) = D-xylose + NADH + H(+). It carries out the reaction xylitol + NADP(+) = D-xylose + NADPH + H(+). The protein operates within carbohydrate metabolism; D-xylose degradation. In terms of biological role, reduces D-xylose into xylitol. Preferentially utilizes NADPH as a cosubstrate. The polypeptide is NADPH-dependent D-xylose reductase (XYL1) (Candida boidinii (Yeast)).